Consider the following 924-residue polypeptide: Probable dipeptidyl-aminopeptidase B (924 aa).

Positions 1 to 12 (MPSTYSDDNTLR) are enriched in polar residues. Positions 1 to 102 (MPSTYSDDNT…RSNQRSSADG (102 aa)) are disordered. Residues 1 to 111 (MPSTYSDDNT…GQRMDRSLRR (111 aa)) are Cytoplasmic-facing. The segment covering 14-23 (GLDRFRDHSP) has biased composition (basic and acidic residues). Over residues 31-43 (SQETDSTVSTTSI) the composition is skewed to polar residues. Residues 47 to 58 (RIQERLDTKEFP) show a composition bias toward basic and acidic residues. Residues 87–100 (NASPSSRSNQRSSA) are compositionally biased toward low complexity. Residues 112-132 (WLFIVSGALVATWVIGLIFFV) form a helical; Signal-anchor for type II membrane protein membrane-spanning segment. Residues 133 to 924 (SSKAYKPSSS…GMKRRALPTA (792 aa)) are Vacuolar-facing. N-linked (GlcNAc...) asparagine glycans are attached at residues asparagine 231 and asparagine 364. Serine 768 functions as the Charge relay system in the catalytic mechanism. Residue asparagine 827 is glycosylated (N-linked (GlcNAc...) asparagine). Residues aspartate 845 and histidine 878 each act as charge relay system in the active site.

It belongs to the peptidase S9B family.

It is found in the vacuole membrane. It carries out the reaction Release of an N-terminal dipeptide, Xaa-Yaa-|-Zaa-, from a polypeptide, preferentially when Yaa is Pro, provided Zaa is neither Pro nor hydroxyproline.. Its function is as follows. Type IV dipeptidyl-peptidase which removes N-terminal dipeptides sequentially from polypeptides having unsubstituted N-termini provided that the penultimate residue is proline. The chain is Probable dipeptidyl-aminopeptidase B (dapB) from Neurospora crassa (strain ATCC 24698 / 74-OR23-1A / CBS 708.71 / DSM 1257 / FGSC 987).